The primary structure comprises 498 residues: MASAFRSSLKLRASARLPAVRTITTTPRLRAAEKPYFPNEPTAPKLATAIPGPKNKAASEQLNEVFDVRSLNMLADYTKSVGNYIADLDGNMLLDVYAQIASIPVGYNNPHLLKVAASPEMATSLINRPALGNFPSADWAHILKTGILKVAPKGLDQVFTAMAGSDANETAYKAAFMYYRQQQRGGPEKEFTEEEIQSSMLNQTPGSPQLSIMSFKAGFHGRLFGSLSTTRSKPIHKLDIPAFDWPQAPFPSLKYPLEEHAKENAEEEQRCLQEAERLIKEWHNPVAAIIVEPIQSEGGDNHASPAFFRGLREITKRNNVLFIVDEVQTGVGATGKFWAHDHWNLETPPDMVTFSKKAQTAGYYFGNPALRPNKPYRQFNTWMGDPSRALIFRGIIEEIERLFLVENTAATGDYLYSGLERLAKQYPEHLQNLRGKGQGTFIAWDTPKRDEFLVKGKGVGINIGGSGQNAVRLRPMLIFQKHHADILLESIEKIIKQL.

164–165 (GS) contributes to the pyridoxal 5'-phosphate binding site. R222 contributes to the substrate binding site. The residue at position 356 (K356) is an N6-(pyridoxal phosphate)lysine. Residue T381 participates in pyridoxal 5'-phosphate binding.

This sequence belongs to the class-III pyridoxal-phosphate-dependent aminotransferase family. As to quaternary structure, homodimer. The cofactor is pyridoxal 5'-phosphate.

It is found in the cytoplasm. It carries out the reaction 4-aminobutanoate + 2-oxoglutarate = succinate semialdehyde + L-glutamate. In terms of biological role, deaminates gamma-aminobutyric acid (GABA) to succinate-semialdehyde, which in turn is converted to succinate by the succinate semialdehyde dehydrogenase. Required for the degradation of GABA, which is important for utilization of GABA as nitrogen source. The sequence is that of 4-aminobutyrate aminotransferase (gatA) from Emericella nidulans (strain FGSC A4 / ATCC 38163 / CBS 112.46 / NRRL 194 / M139) (Aspergillus nidulans).